A 272-amino-acid polypeptide reads, in one-letter code: HMP-PP phosphatase (272 aa).

Asp-8 functions as the Nucleophile in the catalytic mechanism. Asp-8, Asp-10, and Asp-212 together coordinate Mg(2+).

This sequence belongs to the HAD-like hydrolase superfamily. Cof family. It depends on Mg(2+) as a cofactor.

It catalyses the reaction 4-amino-2-methyl-5-(diphosphooxymethyl)pyrimidine + H2O = 4-amino-2-methyl-5-(phosphooxymethyl)pyrimidine + phosphate + H(+). In terms of biological role, catalyzes the hydrolysis of 4-amino-2-methyl-5-hydroxymethylpyrimidine pyrophosphate (HMP-PP) to 4-amino-2-methyl-5-hydroxymethylpyrimidine phosphate (HMP-P). This is HMP-PP phosphatase from Salmonella agona (strain SL483).